A 313-amino-acid chain; its full sequence is Porphobilinogen deaminase (313 aa).

The residue at position 242 (C242) is an S-(dipyrrolylmethanemethyl)cysteine.

This sequence belongs to the HMBS family. In terms of assembly, monomer. It depends on dipyrromethane as a cofactor.

It catalyses the reaction 4 porphobilinogen + H2O = hydroxymethylbilane + 4 NH4(+). The protein operates within porphyrin-containing compound metabolism; protoporphyrin-IX biosynthesis; coproporphyrinogen-III from 5-aminolevulinate: step 2/4. Its function is as follows. Tetrapolymerization of the monopyrrole PBG into the hydroxymethylbilane pre-uroporphyrinogen in several discrete steps. The chain is Porphobilinogen deaminase from Shigella flexneri.